A 504-amino-acid chain; its full sequence is Maturase K (504 aa).

It belongs to the intron maturase 2 family. MatK subfamily.

Its subcellular location is the plastid. The protein resides in the chloroplast. In terms of biological role, usually encoded in the trnK tRNA gene intron. Probably assists in splicing its own and other chloroplast group II introns. The polypeptide is Maturase K (Amaranthus caudatus (Love-lies-bleeding)).